The primary structure comprises 213 residues: ATP synthase peripheral stalk subunit OSCP, mitochondrial (213 aa).

A mitochondrion-targeting transit peptide spans 1–23; that stretch reads MAAPAVSGLSRQVRCFSTSVVRP. Residues 5 to 23 carry the SIFI-degron motif; the sequence is AVSGLSRQVRCFSTSVVRP. Residues lysine 54, lysine 60, lysine 70, and lysine 73 each carry the N6-acetyllysine modification. Lysine 90 is modified (N6-succinyllysine). An N6-acetyllysine; alternate mark is found at lysine 158 and lysine 162. N6-succinyllysine; alternate occurs at positions 158 and 162. An N6-acetyllysine mark is found at lysine 172, lysine 176, and lysine 192. Lysine 199 carries the post-translational modification N6-succinyllysine.

It belongs to the ATPase delta chain family. Component of the ATP synthase complex composed at least of ATP5F1A/subunit alpha, ATP5F1B/subunit beta, ATP5MC1/subunit c (homooctomer), MT-ATP6/subunit a, MT-ATP8/subunit 8, ATP5ME/subunit e, ATP5MF/subunit f, ATP5MG/subunit g, ATP5MK/subunit k, ATP5MJ/subunit j, ATP5F1C/subunit gamma, ATP5F1D/subunit delta, ATP5F1E/subunit epsilon, ATP5PF/subunit F6, ATP5PB/subunit b, ATP5PD/subunit d, ATP5PO/subunit OSCP. ATP synthase complex consists of a soluble F(1) head domain (subunits alpha(3) and beta(3)) - the catalytic core - and a membrane F(0) domain - the membrane proton channel (subunits c, a, 8, e, f, g, k and j). These two domains are linked by a central stalk (subunits gamma, delta, and epsilon) rotating inside the F1 region and a stationary peripheral stalk (subunits F6, b, d, and OSCP). Acetylation at Lys-162 decreases ATP production. Deacetylated by SIRT3. In terms of processing, in response to mitochondrial stress, the precursor protein is ubiquitinated by the SIFI complex in the cytoplasm before mitochondrial import, leading to its degradation. Within the SIFI complex, UBR4 initiates ubiquitin chain that are further elongated or branched by KCMF1.

Its subcellular location is the mitochondrion. The protein localises to the mitochondrion inner membrane. Subunit OSCP, of the mitochondrial membrane ATP synthase complex (F(1)F(0) ATP synthase or Complex V) that produces ATP from ADP in the presence of a proton gradient across the membrane which is generated by electron transport complexes of the respiratory chain. ATP synthase complex consist of a soluble F(1) head domain - the catalytic core - and a membrane F(1) domain - the membrane proton channel. These two domains are linked by a central stalk rotating inside the F(1) region and a stationary peripheral stalk. During catalysis, ATP synthesis in the catalytic domain of F(1) is coupled via a rotary mechanism of the central stalk subunits to proton translocation. In vivo, can only synthesize ATP although its ATP hydrolase activity can be activated artificially in vitro. Part of the complex F(0) domain. Part of the complex F(0) domain and the peripheric stalk, which acts as a stator to hold the catalytic alpha(3)beta(3) subcomplex and subunit a/ATP6 static relative to the rotary elements. The polypeptide is ATP synthase peripheral stalk subunit OSCP, mitochondrial (Homo sapiens (Human)).